Here is a 60-residue protein sequence, read N- to C-terminus: Large ribosomal subunit protein uL30 (60 aa).

Belongs to the universal ribosomal protein uL30 family. As to quaternary structure, part of the 50S ribosomal subunit.

The protein is Large ribosomal subunit protein uL30 of Dechloromonas aromatica (strain RCB).